The following is a 642-amino-acid chain: Protein INCREASED PETAL GROWTH ANISOTROPY 1 (642 aa).

Positions 1 to 60 (MVAGKVRVTMGFHKSPSTKKTKDMPSPLPLPPPPPPPLKPPSSGSATTKPPINPSKPGFT) are disordered. Positions 26–40 (SPLPLPPPPPPPLKP) are enriched in pro residues. A coiled-coil region spans residues 80–183 (AASHNGVVSE…EAEIVELRKL (104 aa)). Positions 223 to 351 (NLPEPITNQE…PPKSLSIASA (129 aa)) are disordered. The span at 247 to 256 (DIYRKDEIES) shows a compositional bias: basic and acidic residues. The segment covering 258 to 277 (SRSSNSEELTESSSLSTVRS) has biased composition (low complexity). The segment covering 302–344 (DPPPQKSIPPPPPPPPPPLLQQPPPPPSVSKAPPPPPPPPPPK) has biased composition (pro residues).

This sequence belongs to the IPGA1 family. Associates to cortical microtubules via its N-terminal region. Interacts with ANGUSTIFOLIA (AN) on microtubule upon mechanical stress to regulate microtubule organization. Binds to the microtubule-severing enzyme KATANIN (KTN1). As to expression, expressed ubiquitously at all development stages, with highest in developing petals. During mechanical stress, accumulates in granules on microtubules.

It localises to the cytoplasm. Its subcellular location is the cytoskeleton. The protein localises to the cytosol. The protein resides in the cell membrane. Functionally, microtubule-associated protein involved in the regulation of anisotropic petal and cotyledons growth and shape by affecting cortical microtubule organization. Prevents cortical microtubules organization into parallel arrays oriented perpendicular to the axis of cell elongation thus limiting anisotropic cell growth in the late phases of petal development. Cooperatively with ANGUSTIFOLIA (AN), negatively regulates cortical microtubules (CMTs) organization in response to mechanical stress and modulates pavement cells morphogenesis leading to puzzle shape, probably in an AAA1/KTN1-dependent manner. This Arabidopsis thaliana (Mouse-ear cress) protein is Protein INCREASED PETAL GROWTH ANISOTROPY 1.